A 77-amino-acid chain; its full sequence is Sec-independent protein translocase protein TatA (77 aa).

Residues 1–21 form a helical membrane-spanning segment; it reads MGSFSIWHWLIVLVIVMLVFG. Positions 50-77 are disordered; the sequence is ADASTQQKISGGQTLEGEAREKVEKTHS. The segment covering 53–62 has biased composition (polar residues); sequence STQQKISGGQ. Positions 66-77 are enriched in basic and acidic residues; sequence GEAREKVEKTHS.

Belongs to the TatA/E family. In terms of assembly, the Tat system comprises two distinct complexes: a TatABC complex, containing multiple copies of TatA, TatB and TatC subunits, and a separate TatA complex, containing only TatA subunits. Substrates initially bind to the TatABC complex, which probably triggers association of the separate TatA complex to form the active translocon.

Its subcellular location is the cell inner membrane. In terms of biological role, part of the twin-arginine translocation (Tat) system that transports large folded proteins containing a characteristic twin-arginine motif in their signal peptide across membranes. TatA could form the protein-conducting channel of the Tat system. The chain is Sec-independent protein translocase protein TatA from Azoarcus sp. (strain BH72).